We begin with the raw amino-acid sequence, 481 residues long: Proline--tRNA ligase (481 aa).

This sequence belongs to the class-II aminoacyl-tRNA synthetase family. ProS type 3 subfamily. As to quaternary structure, homodimer.

The protein resides in the cytoplasm. The catalysed reaction is tRNA(Pro) + L-proline + ATP = L-prolyl-tRNA(Pro) + AMP + diphosphate. Functionally, catalyzes the attachment of proline to tRNA(Pro) in a two-step reaction: proline is first activated by ATP to form Pro-AMP and then transferred to the acceptor end of tRNA(Pro). The sequence is that of Proline--tRNA ligase from Prosthecochloris aestuarii (strain DSM 271 / SK 413).